The following is a 152-amino-acid chain: uncharacterized protein (152 aa).

The next 3 helical transmembrane spans lie at 13–33, 38–58, and 69–89; these read LLWF…LLFF, LIVE…SLFM, and WVIF…FFVI.

It localises to the cell membrane. This is an uncharacterized protein from Mycoplasma pneumoniae (strain ATCC 29342 / M129 / Subtype 1) (Mycoplasmoides pneumoniae).